The chain runs to 344 residues: Glycerol-3-phosphate dehydrogenase [NAD(P)+] (344 aa).

NADPH contacts are provided by Ser-11, Trp-12, His-32, Arg-33, and Lys-106. Lys-106, Gly-136, and Ser-138 together coordinate sn-glycerol 3-phosphate. Ala-140 contacts NADPH. Residues Lys-192, Asp-245, Ser-255, Arg-256, and Asn-257 each coordinate sn-glycerol 3-phosphate. Lys-192 functions as the Proton acceptor in the catalytic mechanism. Arg-256 provides a ligand contact to NADPH. Residues Val-280 and Glu-282 each coordinate NADPH.

Belongs to the NAD-dependent glycerol-3-phosphate dehydrogenase family.

It is found in the cytoplasm. The catalysed reaction is sn-glycerol 3-phosphate + NAD(+) = dihydroxyacetone phosphate + NADH + H(+). It carries out the reaction sn-glycerol 3-phosphate + NADP(+) = dihydroxyacetone phosphate + NADPH + H(+). The protein operates within membrane lipid metabolism; glycerophospholipid metabolism. Its function is as follows. Catalyzes the reduction of the glycolytic intermediate dihydroxyacetone phosphate (DHAP) to sn-glycerol 3-phosphate (G3P), the key precursor for phospholipid synthesis. In Geobacillus kaustophilus (strain HTA426), this protein is Glycerol-3-phosphate dehydrogenase [NAD(P)+].